The primary structure comprises 170 residues: Bacilliredoxin SRU_1493 (170 aa).

The segment at 140–170 (CGDEEPPADAPSRPDPSSSGEGLPSTFQSIT) is disordered.

Belongs to the bacilliredoxin family.

In Salinibacter ruber (strain DSM 13855 / M31), this protein is Bacilliredoxin SRU_1493.